The chain runs to 564 residues: Tripeptidyl-peptidase 1 (564 aa).

A signal peptide spans 1–19 (MGLQACLLGLFALILSGKC). Residues 20 to 195 (SYSPEPDQRR…PEPQVTGTVG (176 aa)) constitute a propeptide, removed in mature form. Cysteine 111 and cysteine 122 form a disulfide bridge. Residues 199 to 564 (GVTPSVIRKR…PALPKTLLNP (366 aa)) enclose the Peptidase S53 domain. 2 N-linked (GlcNAc...) asparagine glycosylation sites follow: asparagine 210 and asparagine 222. Residues glutamate 272 and aspartate 276 each act as charge relay system in the active site. Residues asparagine 286, asparagine 313, and asparagine 443 are each glycosylated (N-linked (GlcNAc...) asparagine). 2 disulfide bridges follow: cysteine 365/cysteine 527 and cysteine 523/cysteine 538. Residue serine 475 is the Charge relay system of the active site. Aspartate 518 and valine 519 together coordinate Ca(2+). Residues glycine 540, glycine 542, and aspartate 544 each contribute to the Ca(2+) site.

As to quaternary structure, monomer. Interacts with CLN5. Interacts with CLN3. It depends on Ca(2+) as a cofactor. In terms of processing, activated by autocatalytic proteolytical processing upon acidification. N-glycosylation is required for processing and activity.

The protein localises to the lysosome. It localises to the melanosome. The enzyme catalyses Release of an N-terminal tripeptide from a polypeptide, but also has endopeptidase activity.. Its function is as follows. Lysosomal serine protease with tripeptidyl-peptidase I activity. May act as a non-specific lysosomal peptidase which generates tripeptides from the breakdown products produced by lysosomal proteinases. Requires substrates with an unsubstituted N-terminus. In Pongo abelii (Sumatran orangutan), this protein is Tripeptidyl-peptidase 1 (TPP1).